A 400-amino-acid polypeptide reads, in one-letter code: Acetate kinase (400 aa).

Residue Asn-10 participates in Mg(2+) binding. An ATP-binding site is contributed by Lys-17. Position 91 (Arg-91) interacts with substrate. The active-site Proton donor/acceptor is Asp-150. ATP-binding positions include 210–214, 285–287, and 333–337; these read HLGNG, DCR, and GIGEN. Glu-387 lines the Mg(2+) pocket.

It belongs to the acetokinase family. As to quaternary structure, homodimer. It depends on Mg(2+) as a cofactor. Mn(2+) serves as cofactor.

The protein localises to the cytoplasm. The enzyme catalyses acetate + ATP = acetyl phosphate + ADP. It participates in metabolic intermediate biosynthesis; acetyl-CoA biosynthesis; acetyl-CoA from acetate: step 1/2. Catalyzes the formation of acetyl phosphate from acetate and ATP. Can also catalyze the reverse reaction. The chain is Acetate kinase from Proteus mirabilis (strain HI4320).